The sequence spans 306 residues: MNGAVRVVLTEVPRTVSLTEGALVCVRILSSTHAGRALVAINGERVRARVPQPMHKGAVLFLRASIRAGTVFLHPQCTSTPPSAEDMSAHFLQRWGVSFSPEAAALIHAHTSLCVPLQPQLIERFALLLKKFPEQKRAHAAFLASILGDRNIPVDAAMLRRMLSTFLGESGAYTDSDTERDLFALVNHTYHSALHWLLVPFERRGAHTVWRGTLSLLLHLHKKTCTQLRVRACNTAGEWVFCVQNNVLTVQRHAARELSRTAQKKTVARLCALLRERGIDFLSVRYGAHADSANDAVPFKGIDVSV.

This is an uncharacterized protein from Treponema pallidum (strain Nichols).